Consider the following 570-residue polypeptide: Coiled-coil domain-containing protein 22 homolog (570 aa).

Disordered regions lie at residues 110 to 129 (RQSE…REQL) and 234 to 280 (LTST…PLEL). A compositionally biased stretch (polar residues) spans 248–257 (TSPTQTSTTA). Low complexity predominate over residues 265-276 (SSEATATSTTTT). 2 coiled-coil regions span residues 308–471 (ELKI…LQRQ) and 529–570 (GEKL…ITVG).

This sequence belongs to the CCDC22 family.

The polypeptide is Coiled-coil domain-containing protein 22 homolog (Drosophila willistoni (Fruit fly)).